Consider the following 168-residue polypeptide: Large ribosomal subunit protein bL9 (168 aa).

Residues 149–168 are disordered; the sequence is QSFEEEPAPEAPAEEAEAAE. Residues 152–168 show a composition bias toward acidic residues; the sequence is EEEPAPEAPAEEAEAAE.

This sequence belongs to the bacterial ribosomal protein bL9 family.

In terms of biological role, binds to the 23S rRNA. The polypeptide is Large ribosomal subunit protein bL9 (Desulfovibrio desulfuricans (strain ATCC 27774 / DSM 6949 / MB)).